A 192-amino-acid chain; its full sequence is UPF0301 protein Bcep1808_0798 (192 aa).

The protein belongs to the UPF0301 (AlgH) family.

The protein is UPF0301 protein Bcep1808_0798 of Burkholderia vietnamiensis (strain G4 / LMG 22486) (Burkholderia cepacia (strain R1808)).